The sequence spans 123 residues: Ribosome-binding factor A (123 aa).

Belongs to the RbfA family. In terms of assembly, monomer. Binds 30S ribosomal subunits, but not 50S ribosomal subunits or 70S ribosomes.

It is found in the cytoplasm. Functionally, one of several proteins that assist in the late maturation steps of the functional core of the 30S ribosomal subunit. Associates with free 30S ribosomal subunits (but not with 30S subunits that are part of 70S ribosomes or polysomes). Required for efficient processing of 16S rRNA. May interact with the 5'-terminal helix region of 16S rRNA. The polypeptide is Ribosome-binding factor A (Prochlorococcus marinus (strain NATL1A)).